The primary structure comprises 611 residues: Alpha-1,2-mannosyltransferase ALG9 (611 aa).

The span at 1–10 (MASRGARQRL) shows a compositional bias: basic residues. Residues 1–23 (MASRGARQRLKGSGASSGDTAPA) are disordered. Over 1 to 135 (MASRGARQRL…FHARILQTNK (135 aa)) the chain is Lumenal. N-linked (GlcNAc...) asparagine glycosylation is present at N77. Residues 136 to 156 (ILVFYFLRCLLAFVSCICELY) traverse the membrane as a helical segment. Residues 157–171 (FYKAVCKKFGLHVSR) are Cytoplasmic-facing. A helical membrane pass occupies residues 172 to 192 (MMLAFLVLSTGMFCSSSAFLP). Over 193–213 (SSFCMYTTLIAMTGWYMDKTS) the chain is Lumenal. Residues 214 to 234 (IAVLGVAAGAILGWPFSAALG) traverse the membrane as a helical segment. Residues 235–249 (LPIAFDLLVMKHRWK) are Cytoplasmic-facing. Residues 250–270 (SFFHWSLMALILFLVPVVVID) form a helical membrane-spanning segment. Topologically, residues 271-304 (SYYYGKLVIAPLNIVLYNVFTPHGPDLYGTEPWY) are lumenal. A helical membrane pass occupies residues 305–325 (FYLINGFLNFNVAFALALLVL). Topologically, residues 326–342 (PLTSLMEYLLQRFHVQN) are cytoplasmic. The chain crosses the membrane as a helical span at residues 343 to 363 (LGHPYWLTLAPMYIWFIIFFI). The Lumenal portion of the chain corresponds to 364-370 (QPHKEER). The chain crosses the membrane as a helical span at residues 371-391 (FLFPVYPLICLCGAVALSALQ). The Cytoplasmic portion of the chain corresponds to 392 to 405 (KCYHFVFQRYRLEH). A helical membrane pass occupies residues 406–426 (YTVTSNWLALGTVFLFGLLSF). The Lumenal portion of the chain corresponds to 427 to 611 (SRSVALFRGY…AKQIRKKSGG (185 aa)). N593 carries N-linked (GlcNAc...) asparagine glycosylation.

Belongs to the glycosyltransferase 22 family. As to expression, ubiquitously expressed; with highest levels in heart, liver and pancreas.

It localises to the endoplasmic reticulum membrane. The enzyme catalyses an alpha-D-Man-(1-&gt;2)-alpha-D-Man-(1-&gt;2)-alpha-D-Man-(1-&gt;3)-[alpha-D-Man-(1-&gt;3)-alpha-D-Man-(1-&gt;6)]-beta-D-Man-(1-&gt;4)-beta-D-GlcNAc-(1-&gt;4)-alpha-D-GlcNAc-diphospho-di-trans,poly-cis-dolichol + a di-trans,poly-cis-dolichyl beta-D-mannosyl phosphate = an alpha-D-Man-(1-&gt;2)-alpha-D-Man-(1-&gt;2)-alpha-D-Man-(1-&gt;3)-[alpha-D-Man-(1-&gt;2)-alpha-D-Man-(1-&gt;3)-alpha-D-Man-(1-&gt;6)]-beta-D-Man-(1-&gt;4)-beta-D-GlcNAc-(1-&gt;4)-alpha-D-GlcNAc-diphospho-di-trans,poly-cis-dolichol + a di-trans,poly-cis-dolichyl phosphate + H(+). It carries out the reaction an alpha-D-Man-(1-&gt;2)-alpha-D-Man-(1-&gt;2)-alpha-D-Man-(1-&gt;3)-[alpha-D-Man-(1-&gt;2)-alpha-D-Man-(1-&gt;3)-[alpha-D-Man-(1-&gt;6)]-alpha-D-Man-(1-&gt;6)]-beta-D-Man-(1-&gt;4)-beta-D-GlcNAc-(1-&gt;4)-alpha-D-GlcNAc-diphospho-di-trans,poly-cis-dolichol + a di-trans,poly-cis-dolichyl beta-D-mannosyl phosphate = an alpha-D-Man-(1-&gt;2)-alpha-D-Man-(1-&gt;2)-alpha-D-Man-(1-&gt;3)-[alpha-D-Man-(1-&gt;2)-alpha-D-Man-(1-&gt;3)-[alpha-D-Man-(1-&gt;2)-alpha-D-Man-(1-&gt;6)]-alpha-D-Man-(1-&gt;6)]-beta-D-Man-(1-&gt;4)-beta-D-GlcNAc-(1-&gt;4)-alpha-D-GlcNAc-diphospho-di-trans,poly-cis-dolichol + a di-trans,poly-cis-dolichyl phosphate + H(+). It participates in protein modification; protein glycosylation. Mannosyltransferase that operates in the biosynthetic pathway of dolichol-linked oligosaccharides, the glycan precursors employed in protein asparagine (N)-glycosylation. The assembly of dolichol-linked oligosaccharides begins on the cytosolic side of the endoplasmic reticulum membrane and finishes in its lumen. The sequential addition of sugars to dolichol pyrophosphate produces dolichol-linked oligosaccharides containing fourteen sugars, including two GlcNAcs, nine mannoses and three glucoses. Once assembled, the oligosaccharide is transferred from the lipid to nascent proteins by oligosaccharyltransferases. In the lumen of the endoplasmic reticulum, catalyzes the addition of the seventh and ninth alpha-1,2-linked mannose residues to Man(6)GlcNAc(2)-PP-dolichol and Man(8)GlcNAc(2)-PP-dolichol respectively. The polypeptide is Alpha-1,2-mannosyltransferase ALG9 (Homo sapiens (Human)).